Reading from the N-terminus, the 251-residue chain is Hydroxyacylglutathione hydrolase (251 aa).

The Zn(2+) site is built by histidine 53, histidine 55, aspartate 57, histidine 58, histidine 110, aspartate 127, and histidine 165.

It belongs to the metallo-beta-lactamase superfamily. Glyoxalase II family. In terms of assembly, monomer. Zn(2+) is required as a cofactor.

It carries out the reaction an S-(2-hydroxyacyl)glutathione + H2O = a 2-hydroxy carboxylate + glutathione + H(+). Its pathway is secondary metabolite metabolism; methylglyoxal degradation; (R)-lactate from methylglyoxal: step 2/2. Thiolesterase that catalyzes the hydrolysis of S-D-lactoyl-glutathione to form glutathione and D-lactic acid. The chain is Hydroxyacylglutathione hydrolase from Escherichia coli O81 (strain ED1a).